The sequence spans 252 residues: Hydroxyacylglutathione hydrolase (252 aa).

Zn(2+) contacts are provided by histidine 54, histidine 56, aspartate 58, histidine 59, histidine 111, aspartate 130, and histidine 170.

The protein belongs to the metallo-beta-lactamase superfamily. Glyoxalase II family. As to quaternary structure, monomer. Requires Zn(2+) as cofactor.

It carries out the reaction an S-(2-hydroxyacyl)glutathione + H2O = a 2-hydroxy carboxylate + glutathione + H(+). Its pathway is secondary metabolite metabolism; methylglyoxal degradation; (R)-lactate from methylglyoxal: step 2/2. Thiolesterase that catalyzes the hydrolysis of S-D-lactoyl-glutathione to form glutathione and D-lactic acid. The sequence is that of Hydroxyacylglutathione hydrolase from Francisella tularensis subsp. novicida (strain U112).